A 534-amino-acid chain; its full sequence is Transcription factor RBF1 (534 aa).

The disordered stretch occupies residues 1-36 (MSSNKNQSDLNIPTNSASLKQKQRQQLGIKSEIGAS). The stretch at 77–147 (AAAAELQHRA…YQQQQQLHQL (71 aa)) forms a coiled coil. 4 disordered regions span residues 262 to 285 (ANLY…HNEE), 353 to 372 (QQQQ…QQAA), 402 to 439 (QLSQ…PHGL), and 477 to 534 (TQGN…SGFL). A compositionally biased stretch (basic and acidic residues) spans 267–285 (NEKDQKRKNKPDEPGHNEE). Positions 332-386 (HHLLQQEQQQQQQQQQQQQQQQQQQQQQQHNANSQAQQQAAQLQQQMQQQLQASG) form a coiled coil. Over residues 402–435 (QLSQQQSQQQQLHHIPQQRQRTQSQQSQQQPQQT) the composition is skewed to low complexity.

This sequence belongs to the RBF1 family.

It localises to the nucleus. The protein localises to the chromosome. It is found in the telomere. Transcriptional activator that binds to the RPG box and to telomeres. Involved in the regulation of the transition between yeast and filamentous forms and plays a role in virulence. Induces expression of HWP1, a major hyphal cell protein and virulence factor. The polypeptide is Transcription factor RBF1 (RBF1) (Candida albicans (strain SC5314 / ATCC MYA-2876) (Yeast)).